Reading from the N-terminus, the 361-residue chain is G-protein coupled receptor 52 (361 aa).

The Extracellular portion of the chain corresponds to 1–44 (MNESRWTEWRILNMSSSIVNVSEHHSCPLGFGHYSVEDVCIFET). N-linked (GlcNAc...) asparagine glycans are attached at residues N2, N13, and N20. The chain crosses the membrane as a helical span at residues 45 to 65 (VVIVLLTFLIISGNLTVIFVF). Residues 66–81 (HCAPLLHHYTTSYFIQ) lie on the Cytoplasmic side of the membrane. The helical transmembrane segment at 82–102 (TMAYADLLVGVTCLVPTLSLL) threads the bilayer. Topologically, residues 103–115 (HYSTGVHESLTCQ) are extracellular. C114 and C193 are disulfide-bonded. Residues 116–136 (VFGYIISVLKSVSMACLACIS) form a helical membrane-spanning segment. The Cytoplasmic portion of the chain corresponds to 137–159 (VDRYLAITKPLSYNQLVTPCRLR). Residues 160-180 (ICIIMIWIYSCLIFLPSFFGW) form a helical membrane-spanning segment. Topologically, residues 181 to 205 (GKPGYHGDIFEWCATSWLTSAYFTC) are extracellular. Residues 206–226 (FIVCLLYAPAALVVCFTYFHI) form a helical membrane-spanning segment. Residues 227–265 (FKICRQHTKEINDRRARFPSHEVEASREAGHSPDRRYAM) are Cytoplasmic-facing. The chain crosses the membrane as a helical span at residues 266–286 (VLFRITSVFYMLWLPYIIYFL). Over 287–296 (LESSRVLDNP) the chain is Extracellular. A helical membrane pass occupies residues 297 to 317 (TLSFLTTWLAISNSFCNCVIY). The Cytoplasmic portion of the chain corresponds to 318 to 361 (SLSNSVFRLGLRRLSETMCTSCVCAKDQEAQDPKPRRRANSCSI).

This sequence belongs to the G-protein coupled receptor 1 family. In terms of tissue distribution, expressed in brain, especially in striatum. Expressed in the striatum, nucleus accumbens, and lateral globus pallidus.

It localises to the cell membrane. Functionally, G- protein coupled receptor activated by antipsychotics reserpine leading to an increase in intracellular cAMP and its internalization. May play a role in locomotor activity through modulation of dopamine, NMDA and ADORA2A-induced locomotor activity. These behavioral changes are accompanied by modulation of the dopamine receptor signaling pathway in striatum. Modulates HTT level via cAMP-dependent but PKA independent mechanisms throught activation of RAB39B that translocates HTT to the endoplasmic reticulum, thus avoiding proteasome degradation. The polypeptide is G-protein coupled receptor 52 (Mus musculus (Mouse)).